The sequence spans 153 residues: Endoribonuclease YbeY (153 aa).

Zn(2+)-binding residues include His118, His122, and His128.

Belongs to the endoribonuclease YbeY family. Zn(2+) is required as a cofactor.

It localises to the cytoplasm. Single strand-specific metallo-endoribonuclease involved in late-stage 70S ribosome quality control and in maturation of the 3' terminus of the 16S rRNA. The polypeptide is Endoribonuclease YbeY (Oenococcus oeni (strain ATCC BAA-331 / PSU-1)).